We begin with the raw amino-acid sequence, 757 residues long: MEGPEIKFAEAVLDNGKYGTRTVRFEAGRLAQQAQGAVAAYLDEDTMLLSATSVGKHPKDNFDFFPLTIDVEERSYAAGKIPGSFFRREGRPSTEAILVCRLIDRPLRPSFITGLRNEVQVVITVLSIAPDEFYDSLAINAASASSMLSGIPFSGPIAGVRLALIGDQWVVFPKHSQLKEAVFDITVAGRVVTDAQGNEDVAIMMVEAEATEGAWDLIQAGATKPDEAVVAQGLEAAKPFIRQLVAAQASLAQQAAKPTVDYPVFLPYAQQSYDAVSALALEELGTVYRIADKIERQDADDALKTRTKEAVAAKVEAGELPQSALTEFSAAYKSVTKTVVRGRILRDGIRMDGRGLADIRPLDAEVQVIPRVHGSAIFQRGETQILGVTTLNMLKMEQQIDSLSPVTKKRFMTHYNFPPYSTGETGRVGSPKRREIGHGFLAERALVPVLPSREDFPYAIRQVSEALGSNGSTSMGSVCASTLSLLNAGVPLRAPVAGIAMGLVSDTVDGQVRYAALTDILGAEDALGDMDFKVAGTSEFVTAIQLDTKLDGIPTSVLDGALKQAKEARTAILGVLNQAIDAPDEMAPTAPRVISVNIPVDKIGELIGPKGKTINAIQDETGADISIEEDGAVYIGAVDGPSAEAARAQVNAIANPTNPEVGESFLGTVVKIATFGAFVSLLPGKDGLLHISEVRKLAGGKRVENVEDVLGVGQKILVEITKIDDRGKLSLAPVMEEAADQEGSAAASDGPEAPAEG.

Residues aspartate 525 and aspartate 531 each coordinate Mg(2+). The KH domain maps to 591–650 (PRVISVNIPVDKIGELIGPKGKTINAIQDETGADISIEEDGAVYIGAVDGPSAEAARAQV). The S1 motif domain occupies 662-734 (GESFLGTVVK…DRGKLSLAPV (73 aa)). A disordered region spans residues 736–757 (EEAADQEGSAAASDGPEAPAEG).

Belongs to the polyribonucleotide nucleotidyltransferase family. The cofactor is Mg(2+).

The protein localises to the cytoplasm. The enzyme catalyses RNA(n+1) + phosphate = RNA(n) + a ribonucleoside 5'-diphosphate. Functionally, involved in mRNA degradation. Catalyzes the phosphorolysis of single-stranded polyribonucleotides processively in the 3'- to 5'-direction. This chain is Polyribonucleotide nucleotidyltransferase, found in Clavibacter sepedonicus (Clavibacter michiganensis subsp. sepedonicus).